A 467-amino-acid chain; its full sequence is GTPase Der (467 aa).

EngA-type G domains lie at 25–188 (PVVA…PEAP) and 199–372 (RRVA…ASWE). GTP is bound by residues 31-38 (GRPNVGKS), 78-82 (DTGGW), 140-143 (NKAD), 205-212 (GRPNVGKS), 252-256 (DTAGL), and 317-320 (NKWD). Positions 373–455 (TRVPTAQLNA…PIEISVRARK (83 aa)) constitute a KH-like domain.

The protein belongs to the TRAFAC class TrmE-Era-EngA-EngB-Septin-like GTPase superfamily. EngA (Der) GTPase family. Associates with the 50S ribosomal subunit.

GTPase that plays an essential role in the late steps of ribosome biogenesis. The sequence is that of GTPase Der from Salinispora tropica (strain ATCC BAA-916 / DSM 44818 / JCM 13857 / NBRC 105044 / CNB-440).